A 282-amino-acid chain; its full sequence is Orotidine 5'-phosphate decarboxylase (282 aa).

The active-site Proton donor is the Lys95.

Belongs to the OMP decarboxylase family. Type 2 subfamily.

The enzyme catalyses orotidine 5'-phosphate + H(+) = UMP + CO2. It functions in the pathway pyrimidine metabolism; UMP biosynthesis via de novo pathway; UMP from orotate: step 2/2. The polypeptide is Orotidine 5'-phosphate decarboxylase (Polaromonas naphthalenivorans (strain CJ2)).